Consider the following 201-residue polypeptide: Ubiquitin-conjugating enzyme E2 E2 (201 aa).

Over residues 1–10 (MSTEAQRVDD) the composition is skewed to basic and acidic residues. The interval 1–55 (MSTEAQRVDDSPSTSGGSSDGDQRESVQQEPDREQVQPKKKEGKISSKTAAKLST) is disordered. Ser-2 bears the N-acetylserine mark. 4 positions are modified to phosphoserine: Ser-11, Ser-15, Ser-18, and Ser-19. The span at 21-45 (GDQRESVQQEPDREQVQPKKKEGKI) shows a compositional bias: basic and acidic residues. Residues 46 to 55 (SSKTAAKLST) are compositionally biased toward low complexity. The 147-residue stretch at 55 to 201 (TSAKRIQKEL…ARQWTKRYAT (147 aa)) folds into the UBC core domain. Cys-139 acts as the Glycyl thioester intermediate in catalysis.

It belongs to the ubiquitin-conjugating enzyme family. Autoubiquitinated.

The enzyme catalyses S-ubiquitinyl-[E1 ubiquitin-activating enzyme]-L-cysteine + [E2 ubiquitin-conjugating enzyme]-L-cysteine = [E1 ubiquitin-activating enzyme]-L-cysteine + S-ubiquitinyl-[E2 ubiquitin-conjugating enzyme]-L-cysteine.. The protein operates within protein modification; protein ubiquitination. Functionally, accepts ubiquitin from the E1 complex and catalyzes its covalent attachment to other proteins. In vitro catalyzes 'Lys-11'- and 'Lys-48'-, as well as 'Lys-63'-linked polyubiquitination. Catalyzes the ISGylation of influenza A virus NS1 protein. This is Ubiquitin-conjugating enzyme E2 E2 (Ube2e2) from Mus musculus (Mouse).